A 456-amino-acid chain; its full sequence is Methionine aminopeptidase 2 (456 aa).

The segment covering 1–11 (MTIPVPKPAHP) has biased composition (pro residues). The interval 1–127 (MTIPVPKPAH…SYRTTSSEKR (127 aa)) is disordered. Acidic residues predominate over residues 31 to 45 (EADEEEDDDDEEGKE). A compositionally biased stretch (basic residues) spans 66-79 (KKKKKKKKKPKKKK). Substrate is bound at residue H209. Residues D229, D240, and H309 each coordinate a divalent metal cation. H317 is a binding site for substrate. The a divalent metal cation site is built by E343 and E437.

Belongs to the peptidase M24A family. Methionine aminopeptidase eukaryotic type 2 subfamily. The cofactor is Co(2+). It depends on Zn(2+) as a cofactor. Requires Mn(2+) as cofactor. Fe(2+) is required as a cofactor.

The protein localises to the cytoplasm. It carries out the reaction Release of N-terminal amino acids, preferentially methionine, from peptides and arylamides.. In terms of biological role, cotranslationally removes the N-terminal methionine from nascent proteins. The N-terminal methionine is often cleaved when the second residue in the primary sequence is small and uncharged (Met-Ala-, Cys, Gly, Pro, Ser, Thr, or Val). This Puccinia graminis f. sp. tritici (strain CRL 75-36-700-3 / race SCCL) (Black stem rust fungus) protein is Methionine aminopeptidase 2.